Reading from the N-terminus, the 491-residue chain is Aspartyl/glutamyl-tRNA(Asn/Gln) amidotransferase subunit B (491 aa).

The protein belongs to the GatB/GatE family. GatB subfamily. In terms of assembly, heterotrimer of A, B and C subunits.

It carries out the reaction L-glutamyl-tRNA(Gln) + L-glutamine + ATP + H2O = L-glutaminyl-tRNA(Gln) + L-glutamate + ADP + phosphate + H(+). The catalysed reaction is L-aspartyl-tRNA(Asn) + L-glutamine + ATP + H2O = L-asparaginyl-tRNA(Asn) + L-glutamate + ADP + phosphate + 2 H(+). Functionally, allows the formation of correctly charged Asn-tRNA(Asn) or Gln-tRNA(Gln) through the transamidation of misacylated Asp-tRNA(Asn) or Glu-tRNA(Gln) in organisms which lack either or both of asparaginyl-tRNA or glutaminyl-tRNA synthetases. The reaction takes place in the presence of glutamine and ATP through an activated phospho-Asp-tRNA(Asn) or phospho-Glu-tRNA(Gln). The polypeptide is Aspartyl/glutamyl-tRNA(Asn/Gln) amidotransferase subunit B (Paraburkholderia phymatum (strain DSM 17167 / CIP 108236 / LMG 21445 / STM815) (Burkholderia phymatum)).